The chain runs to 319 residues: D-alanine--D-alanine ligase (319 aa).

Positions 1-23 are disordered; that stretch reads MTGPEWAHTRGTKVGQSSRTPPK. In terms of domain architecture, ATP-grasp spans 120 to 313; it reads KDAFVAAGLP…FGKLCAWMVE (194 aa). 147–197 lines the ATP pocket; sequence MQPPYVVKPNNEGSSVGVYLVHEAANGPPQLSEDMPQEVMVEAFAPGRELT. The Mg(2+) site is built by aspartate 264, glutamate 280, and asparagine 282.

Belongs to the D-alanine--D-alanine ligase family. Mg(2+) serves as cofactor. Requires Mn(2+) as cofactor.

It is found in the cytoplasm. The enzyme catalyses 2 D-alanine + ATP = D-alanyl-D-alanine + ADP + phosphate + H(+). It functions in the pathway cell wall biogenesis; peptidoglycan biosynthesis. In terms of biological role, cell wall formation. This Roseobacter denitrificans (strain ATCC 33942 / OCh 114) (Erythrobacter sp. (strain OCh 114)) protein is D-alanine--D-alanine ligase.